A 253-amino-acid chain; its full sequence is Acidic endochitinase Q (253 aa).

Residues 1–24 (MEFSGSPMALFCCVFFLFLTGSLA) form the signal peptide. Residue glutamate 92 is the Proton donor of the active site. A disulfide bridge links cysteine 212 with cysteine 244.

The protein belongs to the glycosyl hydrolase 19 family. Chitinase class I subfamily.

The protein resides in the secreted. The catalysed reaction is Random endo-hydrolysis of N-acetyl-beta-D-glucosaminide (1-&gt;4)-beta-linkages in chitin and chitodextrins.. Defense against chitin-containing fungal pathogens. This is Acidic endochitinase Q from Nicotiana tabacum (Common tobacco).